Here is a 126-residue protein sequence, read N- to C-terminus: uncharacterized protein (126 aa).

The chain crosses the membrane as a helical span at residues 55 to 77 (MLLINSNLVLSGLLLFIDVYRAA).

Its subcellular location is the membrane. This is an uncharacterized protein from Dictyostelium discoideum (Social amoeba).